Here is a 107-residue protein sequence, read N- to C-terminus: Glutaredoxin-1 (107 aa).

Residue Ala-2 is modified to N-acetylalanine. The Glutaredoxin domain occupies 3–106 (QEFVNCKIQS…ARLKQIGALQ (104 aa)). Position 9 is an N6-succinyllysine (Lys-9). 2 cysteine pairs are disulfide-bonded: Cys-23/Cys-26 and Cys-79/Cys-83.

This sequence belongs to the glutaredoxin family.

The protein localises to the cytoplasm. Its function is as follows. Has a glutathione-disulfide oxidoreductase activity in the presence of NADPH and glutathione reductase. Reduces low molecular weight disulfides and proteins. The polypeptide is Glutaredoxin-1 (Glrx) (Rattus norvegicus (Rat)).